The sequence spans 156 residues: CD-NTase/cGAS isopeptidase (156 aa).

In terms of domain architecture, MPN spans 16-156 (LVVIMGHVVT…LITVFKKIES (141 aa)). Glu39 (proton donor/acceptor) is an active-site residue. Residues His101, His103, and Asp114 each contribute to the Zn(2+) site. The short motif at 101-114 (HTHPEDRPFPSATD) is the JAMM motif element.

This sequence belongs to the peptidase M67B family. Cap3 isopeptidase subfamily. Zn(2+) serves as cofactor.

Its activity is regulated as follows. Cleavage of conjugated proteins is inhibited by EDTA. In terms of biological role, metalloprotease priming reversal component of a CBASS system. CBASS (cyclic oligonucleotide-based antiphage signaling system) provides immunity against bacteriophages. The CD-NTase protein (DncV) synthesizes cyclic nucleotides in response to infection; these serve as specific second messenger signals. The signals activate a diverse range of effectors, leading to bacterial cell death and thus abortive phage infection. A type II-A(GA) CBASS system. Functionally, reverses the primed state of DncV, the CD-NTase. Cleaves a DncV-GFP (green fluorescent protein) fusion protein precisely at the C-terminus of DncV. Overexpression decreases the efficacy of CBASS protection against phages T2, T4, T5 and T6, blocks formation of DncV-conjugates in vivo, and inhibits in vivo activation of DncV. Antagonism of phage defense upon overexpression is CBASS-system specific, Cap3 from this bacteria only antagonizes its cognate CBASS system and not that of C.freundii, E.coli or E.hormaechei. Its function is as follows. Protects E.coli against phage infection. When the CBASS operon (capV-dncV-cap2-cap3) is introduced in E.coli MG1655 there is about 100-fold protection against phages P1 and T2. When the operon is introduced in E.coli MG1655 there is a more than 10(3) decrease in the efficiency of T2 plaque formation. Protects 100-fold against phage T5, offers no protection against T7. When the operon is introduced in E.coli MG1655 it protects against phages T2, T4, T5 and T6. Another paper shows the operon confers protection against phages P1, T2, T5 and T6 but not T4 or lambda. In Vibrio cholerae serotype O1 (strain ATCC 39315 / El Tor Inaba N16961), this protein is CD-NTase/cGAS isopeptidase.